The primary structure comprises 458 residues: Peptidyl-prolyl cis-trans isomerase FKBP4 (458 aa).

Position 1 is an N-acetylmethionine; in peptidyl-prolyl cis-trans isomerase FKBP4; alternate (M1). The tract at residues 1-24 (MTAEEMKAAENGAQSAPLPLEGVD) is disordered. T2 is modified (N-acetylthreonine; in peptidyl-prolyl cis-trans isomerase FKBP4, N-terminally processed; partial). Positions 50-138 (GDRVFVHYTG…VFEVELFEFK (89 aa)) constitute a PPIase FKBP-type 1 domain. T143 carries the phosphothreonine; by CK2 modification. The PPIase FKBP-type 2 domain occupies 167-253 (GAMVEVALEG…RYEVRLKSFE (87 aa)). A Phosphotyrosine modification is found at Y220. Positions 267 to 400 (LEQSNIVKER…TQLAVCQQRT (134 aa)) are interaction with tubulin. 3 TPR repeats span residues 270–303 (SNIVKERGTAYFKEGKYKQALLQYKKIVSWLEYE), 319–352 (LASHLNLAMCHLKLQAFSAAIESCNKALELDSNN), and 353–386 (EKGLFRRGEAHLAVNDFDLARADFQKVLQLYPSN). K282 bears the N6-acetyllysine mark. R373 is subject to Omega-N-methylarginine. A disordered region spans residues 428–458 (EVAAGDHPTDAEMKGERNNVAENQSRVETEA). The span at 434–458 (HPTDAEMKGERNNVAENQSRVETEA) shows a compositional bias: basic and acidic residues. T436 carries the phosphothreonine modification. K441 is covalently cross-linked (Glycyl lysine isopeptide (Lys-Gly) (interchain with G-Cter in SUMO1)). The residue at position 452 (S452) is a Phosphoserine.

In terms of assembly, homodimer. Interacts with GLMN. Associates with HSP90AA1 and HSPA1A/HSPA1B in steroid hormone receptor complexes. Also interacts with peroxisomal phytanoyl-CoA alpha-hydroxylase (PHYH). Interacts with NR3C1 and dynein. Interacts with HSF1 in the HSP90 complex. Associates with tubulin. Interacts with MAPT/TAU. Interacts (via TPR domain) with S100A1, S100A2 and S100A6; the interaction is Ca(2+) dependent. Interaction with S100A1 and S100A2 (but not with S100A6) leads to inhibition of FKBP4-HSP90 interaction. Interacts with dynein; contributes to NR3C1 transport to the nucleus. In terms of processing, phosphorylation by CK2 results in loss of HSP90 binding activity.

It is found in the cytoplasm. The protein resides in the cytosol. It localises to the mitochondrion. Its subcellular location is the nucleus. The protein localises to the cytoskeleton. It carries out the reaction [protein]-peptidylproline (omega=180) = [protein]-peptidylproline (omega=0). With respect to regulation, inhibited by FK506. In terms of biological role, immunophilin protein with PPIase and co-chaperone activities. Component of steroid receptors heterocomplexes through interaction with heat-shock protein 90 (HSP90). May play a role in the intracellular trafficking of heterooligomeric forms of steroid hormone receptors between cytoplasm and nuclear compartments. The isomerase activity controls neuronal growth cones via regulation of TRPC1 channel opening. Also acts as a regulator of microtubule dynamics by inhibiting MAPT/TAU ability to promote microtubule assembly. May have a protective role against oxidative stress in mitochondria. The chain is Peptidyl-prolyl cis-trans isomerase FKBP4 (Fkbp4) from Mus musculus (Mouse).